Reading from the N-terminus, the 298-residue chain is Putative S-adenosyl-L-methionine-dependent methyltransferase MAV_0778 (298 aa).

S-adenosyl-L-methionine-binding positions include Asp-124 and 153-154; that span reads DL.

This sequence belongs to the UPF0677 family.

Functionally, exhibits S-adenosyl-L-methionine-dependent methyltransferase activity. This is Putative S-adenosyl-L-methionine-dependent methyltransferase MAV_0778 from Mycobacterium avium (strain 104).